Reading from the N-terminus, the 381-residue chain is Glycerate kinase (381 aa).

Belongs to the glycerate kinase type-1 family.

The enzyme catalyses (R)-glycerate + ATP = (2R)-3-phosphoglycerate + ADP + H(+). The protein is Glycerate kinase (glxK) of Bacillus cereus (strain ATCC 10987 / NRS 248).